The primary structure comprises 895 residues: Tiger protein D1 (895 aa).

Positions 1–21 (MIHKMYFFLILLFSLFIIVYS) are cleaved as a signal peptide. Topologically, residues 22 to 861 (APNRVTRNET…ERKSSKLSGG (840 aa)) are extracellular. 27 N-linked (GlcNAc...) asparagine glycosylation sites follow: N29, N52, N171, N181, N253, N257, N277, N288, N351, N368, N407, N428, N451, N481, N507, N521, N573, N583, N593, N623, N652, N685, N720, N757, N766, N780, and N799. In terms of domain architecture, IPT/TIG 1 spans 295 to 381 (AVISSISSVS…SGSDAVTFTY (87 aa)). 2 consecutive IPT/TIG domains span residues 560-638 (PKVE…SFYL) and 642-725 (PVIY…TLTY). The chain crosses the membrane as a helical span at residues 862–882 (AIAGITIGCVAGAGALVGSVF). The Cytoplasmic portion of the chain corresponds to 883–895 (YFKLITRVKKAFN).

It is found in the cell membrane. May be involved in the regulation of aggregation. Activates tgrC1. In Dictyostelium discoideum (Social amoeba), this protein is Tiger protein D1 (tgrD1).